Here is a 90-residue protein sequence, read N- to C-terminus: Cell division topological specificity factor (90 aa).

The disordered stretch occupies residues 1-21; sequence MAGFWSKIFGNDEKPSSAQTA. Residues 10–21 show a composition bias toward basic and acidic residues; that stretch reads GNDEKPSSAQTA.

It belongs to the MinE family.

Its function is as follows. Prevents the cell division inhibition by proteins MinC and MinD at internal division sites while permitting inhibition at polar sites. This ensures cell division at the proper site by restricting the formation of a division septum at the midpoint of the long axis of the cell. The polypeptide is Cell division topological specificity factor (Acinetobacter baylyi (strain ATCC 33305 / BD413 / ADP1)).